A 489-amino-acid polypeptide reads, in one-letter code: WD repeat-containing protein JIP5 (489 aa).

One copy of the WD 1 repeat lies at 4-45; the sequence is PLSSDALDLCFHPAAETNLLAVGLISGKIQLINYDDYLSSPS. The interval 46–66 is disordered; the sequence is SSRTPLAPPSKKSKPSTISSA. Residues 124-163 form a WD 2 repeat; it reads EVHDAAPSRVLPVDESLVVTGDDDGVVRLWDVRKGGGKGI. Positions 192–246 are disordered; that stretch reads SIKEAKKSKTQLKKQRRRARQAERLKEHDKEKREQNASDTEASEPDSEDDAAIKV. A compositionally biased stretch (basic residues) spans 199-210; sequence SKTQLKKQRRRA. A compositionally biased stretch (basic and acidic residues) spans 211–227; the sequence is RQAERLKEHDKEKREQN. Residues 232–241 are compositionally biased toward acidic residues; it reads EASEPDSEDD. WD repeat units follow at residues 279–318 and 323–363; these read DQED…LDHV and GHPA…GVIA. The interval 417 to 489 is disordered; it reads IVGLAEDDSD…AGKGGFFSDL (73 aa). 2 stretches are compositionally biased toward acidic residues: residues 421-440 and 449-472; these read AEDD…DDDD and DGAE…DSED.

This sequence belongs to the WD repeat WDR55 family.

The protein localises to the nucleus. The protein resides in the nucleolus. The polypeptide is WD repeat-containing protein JIP5 (JIP5) (Mycosarcoma maydis (Corn smut fungus)).